Reading from the N-terminus, the 861-residue chain is FO synthase (861 aa).

Radical SAM core domains are found at residues 69–319 (ITYS…LQAP) and 528–763 (VTYI…LLHP). Residues 70 to 401 (TYSKSVFIPL…PRLLPHVRAL (332 aa)) form a cofG-like region. Cys-83, Cys-87, Cys-90, Cys-542, Cys-546, and Cys-549 together coordinate [4Fe-4S] cluster. The tract at residues 505 to 838 (DGPALDALTR…KPRTTLYGEV (334 aa)) is cofH-like.

This sequence in the N-terminal section; belongs to the radical SAM superfamily. CofG family. The protein in the C-terminal section; belongs to the radical SAM superfamily. CofH family. [4Fe-4S] cluster serves as cofactor.

It carries out the reaction 5-amino-6-(D-ribitylamino)uracil + L-tyrosine + S-adenosyl-L-methionine = 5-amino-5-(4-hydroxybenzyl)-6-(D-ribitylimino)-5,6-dihydrouracil + 2-iminoacetate + 5'-deoxyadenosine + L-methionine + H(+). The enzyme catalyses 5-amino-5-(4-hydroxybenzyl)-6-(D-ribitylimino)-5,6-dihydrouracil + S-adenosyl-L-methionine = 7,8-didemethyl-8-hydroxy-5-deazariboflavin + 5'-deoxyadenosine + L-methionine + NH4(+) + H(+). It participates in cofactor biosynthesis; coenzyme F0 biosynthesis. Functionally, catalyzes the radical-mediated synthesis of 7,8-didemethyl-8-hydroxy-5-deazariboflavin (FO) from 5-amino-6-(D-ribitylamino)uracil and L-tyrosine. The chain is FO synthase (fbiC) from Streptomyces avermitilis (strain ATCC 31267 / DSM 46492 / JCM 5070 / NBRC 14893 / NCIMB 12804 / NRRL 8165 / MA-4680).